We begin with the raw amino-acid sequence, 1073 residues long: DNA-directed RNA polymerase subunit beta (1073 aa).

This sequence belongs to the RNA polymerase beta chain family. In plastids the minimal PEP RNA polymerase catalytic core is composed of four subunits: alpha, beta, beta', and beta''. When a (nuclear-encoded) sigma factor is associated with the core the holoenzyme is formed, which can initiate transcription.

The protein localises to the plastid. The protein resides in the chloroplast. The catalysed reaction is RNA(n) + a ribonucleoside 5'-triphosphate = RNA(n+1) + diphosphate. In terms of biological role, DNA-dependent RNA polymerase catalyzes the transcription of DNA into RNA using the four ribonucleoside triphosphates as substrates. This Aethionema cordifolium (Lebanon stonecress) protein is DNA-directed RNA polymerase subunit beta.